The following is a 275-amino-acid chain: Adenosylcobinamide-GDP ribazoletransferase (275 aa).

A run of 6 helical transmembrane segments spans residues 52–72 (VVGVVFGVLTAVLLGLLGVLG), 73–93 (VTPLLTAVLVVIMWELLNRMM), 126–146 (MGFSAVLFSLLVQVTAVAALV), 181–201 (FGAMVVGTVRLWWVAAWLVAL), 208–228 (VAVWAAGPAVVWIVPAAGIIA), and 251–271 (IGAGIHLSAAVVAVFCAVAVA).

This sequence belongs to the CobS family. It depends on Mg(2+) as a cofactor.

The protein localises to the cell membrane. It catalyses the reaction alpha-ribazole + adenosylcob(III)inamide-GDP = adenosylcob(III)alamin + GMP + H(+). The enzyme catalyses alpha-ribazole 5'-phosphate + adenosylcob(III)inamide-GDP = adenosylcob(III)alamin 5'-phosphate + GMP + H(+). It functions in the pathway cofactor biosynthesis; adenosylcobalamin biosynthesis; adenosylcobalamin from cob(II)yrinate a,c-diamide: step 7/7. Joins adenosylcobinamide-GDP and alpha-ribazole to generate adenosylcobalamin (Ado-cobalamin). Also synthesizes adenosylcobalamin 5'-phosphate from adenosylcobinamide-GDP and alpha-ribazole 5'-phosphate. The polypeptide is Adenosylcobinamide-GDP ribazoletransferase (Corynebacterium efficiens (strain DSM 44549 / YS-314 / AJ 12310 / JCM 11189 / NBRC 100395)).